We begin with the raw amino-acid sequence, 79 residues long: Putative sulfur carrier protein TM_0983 (79 aa).

Cysteine 17 acts as the Cysteine persulfide intermediate in catalysis.

It belongs to the sulfur carrier protein TusA family.

The protein is Putative sulfur carrier protein TM_0983 of Thermotoga maritima (strain ATCC 43589 / DSM 3109 / JCM 10099 / NBRC 100826 / MSB8).